The following is a 174-amino-acid chain: NADH-ubiquinone oxidoreductase chain 6 (174 aa).

Transmembrane regions (helical) follow at residues 24–44 (LALG…SGLM), 53–73 (ILFL…TSLA), 82–102 (IKLT…SMIL), and 143–163 (FVTI…VKIT).

This sequence belongs to the complex I subunit 6 family.

It is found in the mitochondrion membrane. It carries out the reaction a ubiquinone + NADH + 5 H(+)(in) = a ubiquinol + NAD(+) + 4 H(+)(out). Its function is as follows. Core subunit of the mitochondrial membrane respiratory chain NADH dehydrogenase (Complex I) that is believed to belong to the minimal assembly required for catalysis. Complex I functions in the transfer of electrons from NADH to the respiratory chain. The immediate electron acceptor for the enzyme is believed to be ubiquinone. This Drosophila yakuba (Fruit fly) protein is NADH-ubiquinone oxidoreductase chain 6 (mt:ND6).